A 91-amino-acid chain; its full sequence is uncharacterized protein (91 aa).

Positions 1–21 (MKIISKMLVGALALAVTNVYA) are cleaved as a signal peptide.

The protein belongs to the BhsA/McbA family.

The protein resides in the periplasm. This is an uncharacterized protein from Escherichia coli (strain K12).